The following is a 626-amino-acid chain: Myelin-associated glycoprotein (626 aa).

An N-terminal signal peptide occupies residues 1–19; sequence MIFLTTLPLFWIMISASRG. An interaction with RTN4R and RTN4RL2 region spans residues 20–325; that stretch reads GHWGAWMPSS…RTVELSVMYA (306 aa). The Extracellular portion of the chain corresponds to 20–516; it reads GHWGAWMPSS…HRLMWAKIGP (497 aa). One can recognise an Ig-like V-type domain in the interval 22–120; that stretch reads WGAWMPSSIS…LGGKYYFRGD (99 aa). Intrachain disulfides connect Cys-37-Cys-165, Cys-42-Cys-100, and Cys-159-Cys-217. 65–67 is a binding site for a ganglioside GT1b (d18:1(4E)); it reads YPK. An N-linked (GlcNAc...) asparagine glycan is attached at Asn-99. Residues Arg-118 and 124–128 contribute to the a ganglioside GT1b (d18:1(4E)) site; that span reads YNQYT. Ig-like C2-type domains are found at residues 139-237, 241-325, 327-412, and 413-508; these read NTPN…LDVK, VIVE…VMYA, WKPT…VEFA, and PIIL…GAHR. N-linked (GlcNAc...) asparagine glycans are attached at residues Asn-223 and Asn-246. Cys-261 and Cys-305 are disulfide-bonded. N-linked (GlcNAc...) asparagine glycans are attached at residues Asn-315 and Asn-332. Cysteines 347 and 392 form a disulfide. N-linked (GlcNAc...) asparagine glycosylation is present at Asn-406. 2 cysteine pairs are disulfide-bonded: Cys-421–Cys-430 and Cys-432–Cys-488. Residues Asn-450 and Asn-454 are each glycosylated (N-linked (GlcNAc...) asparagine). A helical membrane pass occupies residues 517-536; it reads VGAVVAFAILIAIVCYITQT. Cys-531 carries S-palmitoyl cysteine lipidation. Residues 537–626 lie on the Cytoplasmic side of the membrane; sequence RRKKNVTESP…LAEYAEIRVK (90 aa). 3 positions are modified to phosphoserine: Ser-545, Ser-547, and Ser-549. The segment at 577 to 626 is required for normal axon myelination in the central nervous system; that stretch reads LGSERRLLGLRGEPPELDLSYSHSDLGKRPTKDSYTLTEELAEYAEIRVK. The segment at 581–608 is disordered; that stretch reads RRLLGLRGEPPELDLSYSHSDLGKRPTK.

This sequence belongs to the immunoglobulin superfamily. SIGLEC (sialic acid binding Ig-like lectin) family. In terms of assembly, monomer and homodimer. Interacts (via the first three N-terminal Ig-like domains) with RTN4R and RTN4RL2. Interacts with isoform 2 of BSG. In terms of processing, N-glycosylated. Post-translationally, phosphorylated on tyrosine residues. Ubiquitinated, leading to proteasomal degradation. Detected in myelin. Detected in olfactory bulb and throughout the brain (at protein level). Detected in brain.

It localises to the cell membrane. The protein resides in the membrane raft. Functionally, adhesion molecule that mediates interactions between myelinating cells and neurons by binding to neuronal sialic acid-containing gangliosides and to the glycoproteins RTN4R and RTN4RL2. Not required for initial myelination, but seems to play a role in the maintenance of normal axon myelination. Protects motoneurons against apoptosis, also after injury; protection against apoptosis is probably mediated via interaction with neuronal RTN4R and RTN4RL2. Required to prevent degeneration of myelinated axons in adults; this probably depends on binding to gangliosides on the axon cell membrane. Negative regulator of neurite outgrowth; in dorsal root ganglion neurons the inhibition is mediated primarily via binding to neuronal RTN4R or RTN4RL2 and to a lesser degree via binding to neuronal gangliosides. In cerebellar granule cells the inhibition is mediated primarily via binding to neuronal gangliosides. In sensory neurons, inhibition of neurite extension depends only partially on RTN4R, RTN4RL2 and gangliosides. Inhibits axon longitudinal growth. Inhibits axon outgrowth by binding to RTN4R. Preferentially binds to alpha-2,3-linked sialic acid. Binds ganglioside Gt1b. The sequence is that of Myelin-associated glycoprotein (Mag) from Rattus norvegicus (Rat).